We begin with the raw amino-acid sequence, 380 residues long: D-threo-3-hydroxyaspartate dehydratase (380 aa).

Lys43 bears the N6-(pyridoxal phosphate)lysine mark.

It belongs to the DSD1 family. Monomer. It depends on pyridoxal 5'-phosphate as a cofactor. Requires Mn(2+) as cofactor. Co(2+) serves as cofactor. Ni(2+) is required as a cofactor.

The catalysed reaction is (3R)-3-hydroxy-D-aspartate = oxaloacetate + NH4(+). Its activity is regulated as follows. Strongly inhibited by hydroxylamine. Modestly inhibited by EDTA. Catalyzes the deamination of D-threo-3-hydroxyaspartate (D-THA). Also exhibits dehydratase activity towards L-threo-3-hydroxyaspartate (L-THA), L-erythro-3-hydroxyaspartate (L-EHA) and D-serine. The protein is D-threo-3-hydroxyaspartate dehydratase (dthadh) of Delftia sp. (strain HT23).